The sequence spans 142 residues: Probable inactive dual specificity protein phosphatase-like At4g18593 (142 aa).

The protein belongs to the protein-tyrosine phosphatase family. Non-receptor class dual specificity subfamily.

In Arabidopsis thaliana (Mouse-ear cress), this protein is Probable inactive dual specificity protein phosphatase-like At4g18593.